Consider the following 212-residue polypeptide: Large ribosomal subunit protein uL3 (212 aa).

Residues 128–146 show a composition bias toward basic residues; sequence RHGASRGPMKHGSKYHRRT. A disordered region spans residues 128 to 164; that stretch reads RHGASRGPMKHGSKYHRRTGSLGAKGPARVFKGRNLP.

The protein belongs to the universal ribosomal protein uL3 family. Part of the 50S ribosomal subunit. Forms a cluster with proteins L14 and L19.

One of the primary rRNA binding proteins, it binds directly near the 3'-end of the 23S rRNA, where it nucleates assembly of the 50S subunit. The polypeptide is Large ribosomal subunit protein uL3 (Desulfitobacterium hafniense (strain Y51)).